The sequence spans 537 residues: Zinc finger protein 835 (537 aa).

The segment at A12–P109 is disordered. The span at T63 to D77 shows a compositional bias: polar residues. Over residues S89–G104 the composition is skewed to basic and acidic residues. C2H2-type zinc fingers lie at residues W110–H132, F138–H160, Y166–H188, H194–H216, Y222–H244, Y250–H272, Y278–H300, Y306–H328, Y334–H356, Y362–H384, Y390–H412, Y418–H440, Y446–H468, and Y474–H496. The tract at residues A497 to D537 is disordered. Residues P509–Q524 are compositionally biased toward polar residues.

The protein belongs to the krueppel C2H2-type zinc-finger protein family.

The protein resides in the nucleus. May be involved in transcriptional regulation. In Homo sapiens (Human), this protein is Zinc finger protein 835 (ZNF835).